Here is a 130-residue protein sequence, read N- to C-terminus: MYRALTRDIEVVVEPFYLEEQSDPEDDRYVWGYRIVISNNSGVAVRLVNRYWNITDQNGQVDEVTGPGVVGEQPRLSPGDTYEYSSGCPLDTPSGLMFGHYQMETDEGELFDVDIPAFSLDSPGLLRVLN.

One can recognise an ApaG domain in the interval Arg3–Arg127. Positions Glu63–Glu83 are disordered.

The sequence is that of Protein ApaG from Rhizobium etli (strain ATCC 51251 / DSM 11541 / JCM 21823 / NBRC 15573 / CFN 42).